A 223-amino-acid polypeptide reads, in one-letter code: PKHD-type hydroxylase syc1482_d (223 aa).

In terms of domain architecture, Fe2OG dioxygenase spans 78 to 176 (RVHSLLFSRY…RFACVGWVQS (99 aa)). 3 residues coordinate Fe cation: His-96, Asp-98, and His-157. Arg-167 is a binding site for 2-oxoglutarate.

Requires Fe(2+) as cofactor. L-ascorbate is required as a cofactor.

The sequence is that of PKHD-type hydroxylase syc1482_d from Synechococcus sp. (strain ATCC 27144 / PCC 6301 / SAUG 1402/1) (Anacystis nidulans).